We begin with the raw amino-acid sequence, 374 residues long: Aminomethyltransferase (374 aa).

The protein belongs to the GcvT family. As to quaternary structure, the glycine cleavage system is composed of four proteins: P, T, L and H.

It catalyses the reaction N(6)-[(R)-S(8)-aminomethyldihydrolipoyl]-L-lysyl-[protein] + (6S)-5,6,7,8-tetrahydrofolate = N(6)-[(R)-dihydrolipoyl]-L-lysyl-[protein] + (6R)-5,10-methylene-5,6,7,8-tetrahydrofolate + NH4(+). Its function is as follows. The glycine cleavage system catalyzes the degradation of glycine. The sequence is that of Aminomethyltransferase from Caldanaerobacter subterraneus subsp. tengcongensis (strain DSM 15242 / JCM 11007 / NBRC 100824 / MB4) (Thermoanaerobacter tengcongensis).